The following is a 364-amino-acid chain: C2 calcium-dependent domain-containing protein 4A (364 aa).

Disordered stretches follow at residues 118-175 (GSPS…PPRC) and 192-242 (AGRS…RPER). Positions 220 to 233 (SPGSPTQAPVTSLS) are enriched in polar residues. The region spanning 254 to 364 (AGGALRLAAE…ELLLGPLLLL (111 aa)) is the C2 domain.

The protein belongs to the C2CD4 family.

The protein resides in the nucleus. In terms of biological role, may be involved in inflammatory process. May regulate cell architecture and adhesion. The sequence is that of C2 calcium-dependent domain-containing protein 4A (C2CD4A) from Bos taurus (Bovine).